A 523-amino-acid polypeptide reads, in one-letter code: Tryptamine 5-hydroxylase (523 aa).

Residues 5–25 (MASTMSLALLVLSAAYVLVAL) form a helical membrane-spanning segment. Cysteine 453 serves as a coordination point for heme.

The protein belongs to the cytochrome P450 family. The cofactor is heme.

Its subcellular location is the endoplasmic reticulum membrane. The enzyme catalyses tryptamine + reduced [NADPH--hemoprotein reductase] + O2 = serotonin + oxidized [NADPH--hemoprotein reductase] + H2O + H(+). Its function is as follows. Involved in serotonin biosynthesis. Catalyzes the conversion of tryptamine to serotonin. Accumulation of serotonin may play a role in innate immunity. The polypeptide is Tryptamine 5-hydroxylase (Oryza sativa subsp. japonica (Rice)).